A 105-amino-acid polypeptide reads, in one-letter code: Large ribosomal subunit protein uL24 (105 aa).

It belongs to the universal ribosomal protein uL24 family. As to quaternary structure, part of the 50S ribosomal subunit.

Functionally, one of two assembly initiator proteins, it binds directly to the 5'-end of the 23S rRNA, where it nucleates assembly of the 50S subunit. Its function is as follows. One of the proteins that surrounds the polypeptide exit tunnel on the outside of the subunit. In Clostridium kluyveri (strain ATCC 8527 / DSM 555 / NBRC 12016 / NCIMB 10680 / K1), this protein is Large ribosomal subunit protein uL24.